The following is a 393-amino-acid chain: NAD(P)H-quinone oxidoreductase subunit H, chloroplastic (393 aa).

The protein belongs to the complex I 49 kDa subunit family. In terms of assembly, NDH is composed of at least 16 different subunits, 5 of which are encoded in the nucleus.

Its subcellular location is the plastid. The protein localises to the chloroplast thylakoid membrane. The catalysed reaction is a plastoquinone + NADH + (n+1) H(+)(in) = a plastoquinol + NAD(+) + n H(+)(out). It catalyses the reaction a plastoquinone + NADPH + (n+1) H(+)(in) = a plastoquinol + NADP(+) + n H(+)(out). In terms of biological role, NDH shuttles electrons from NAD(P)H:plastoquinone, via FMN and iron-sulfur (Fe-S) centers, to quinones in the photosynthetic chain and possibly in a chloroplast respiratory chain. The immediate electron acceptor for the enzyme in this species is believed to be plastoquinone. Couples the redox reaction to proton translocation, and thus conserves the redox energy in a proton gradient. This is NAD(P)H-quinone oxidoreductase subunit H, chloroplastic from Arabis hirsuta (Hairy rock-cress).